The sequence spans 192 residues: Cytidylate kinase (192 aa).

7–15 is an ATP binding site; sequence GPPGSGKST.

This sequence belongs to the cytidylate kinase family. Type 2 subfamily.

It localises to the cytoplasm. It catalyses the reaction CMP + ATP = CDP + ADP. It carries out the reaction dCMP + ATP = dCDP + ADP. The chain is Cytidylate kinase from Halobacterium salinarum (strain ATCC 29341 / DSM 671 / R1).